The primary structure comprises 419 residues: Serine hydroxymethyltransferase (419 aa).

(6S)-5,6,7,8-tetrahydrofolate contacts are provided by residues Leu121 and 125-127; that span reads GHL. Lys229 carries the N6-(pyridoxal phosphate)lysine modification. 354-356 contacts (6S)-5,6,7,8-tetrahydrofolate; sequence SPF.

The protein belongs to the SHMT family. In terms of assembly, homodimer. It depends on pyridoxal 5'-phosphate as a cofactor.

The protein localises to the cytoplasm. The enzyme catalyses (6R)-5,10-methylene-5,6,7,8-tetrahydrofolate + glycine + H2O = (6S)-5,6,7,8-tetrahydrofolate + L-serine. It functions in the pathway one-carbon metabolism; tetrahydrofolate interconversion. Its pathway is amino-acid biosynthesis; glycine biosynthesis; glycine from L-serine: step 1/1. Catalyzes the reversible interconversion of serine and glycine with tetrahydrofolate (THF) serving as the one-carbon carrier. This reaction serves as the major source of one-carbon groups required for the biosynthesis of purines, thymidylate, methionine, and other important biomolecules. Also exhibits THF-independent aldolase activity toward beta-hydroxyamino acids, producing glycine and aldehydes, via a retro-aldol mechanism. This chain is Serine hydroxymethyltransferase, found in Coxiella burnetii (strain RSA 493 / Nine Mile phase I).